A 309-amino-acid polypeptide reads, in one-letter code: Ribose-phosphate pyrophosphokinase (309 aa).

ATP-binding positions include 37 to 39 (DGE) and 96 to 97 (RQ). Mg(2+)-binding residues include H130 and D169. K192 is an active-site residue. D-ribose 5-phosphate-binding positions include R194, D218, and 222 to 226 (DTAGT).

This sequence belongs to the ribose-phosphate pyrophosphokinase family. Class I subfamily. Homohexamer. Requires Mg(2+) as cofactor.

Its subcellular location is the cytoplasm. The catalysed reaction is D-ribose 5-phosphate + ATP = 5-phospho-alpha-D-ribose 1-diphosphate + AMP + H(+). It participates in metabolic intermediate biosynthesis; 5-phospho-alpha-D-ribose 1-diphosphate biosynthesis; 5-phospho-alpha-D-ribose 1-diphosphate from D-ribose 5-phosphate (route I): step 1/1. Involved in the biosynthesis of the central metabolite phospho-alpha-D-ribosyl-1-pyrophosphate (PRPP) via the transfer of pyrophosphoryl group from ATP to 1-hydroxyl of ribose-5-phosphate (Rib-5-P). The polypeptide is Ribose-phosphate pyrophosphokinase (Wolinella succinogenes (strain ATCC 29543 / DSM 1740 / CCUG 13145 / JCM 31913 / LMG 7466 / NCTC 11488 / FDC 602W) (Vibrio succinogenes)).